A 337-amino-acid chain; its full sequence is Membrane-spanning 4-domains subfamily A member 18 (337 aa).

Positions 101–121 are disordered; sequence LGTTDLQTQPGGPQNPPTCAP. 4 helical membrane-spanning segments follow: residues 155–175, 183–203, 220–240, and 252–272; these read LGAIQILIGLTHIFTAINPSL, AISGYLVWGGIFFIISGSLSV, MNVVSAIVSLAGVLLLLVDLI, and GGLLPFVLLEFCLTCVVSHFG.

The protein belongs to the MS4A family.

The protein localises to the membrane. This is Membrane-spanning 4-domains subfamily A member 18 (MS4A18) from Bos taurus (Bovine).